Here is a 251-residue protein sequence, read N- to C-terminus: Pyrroloquinoline-quinone synthase (251 aa).

This sequence belongs to the PqqC family.

The enzyme catalyses 6-(2-amino-2-carboxyethyl)-7,8-dioxo-1,2,3,4,7,8-hexahydroquinoline-2,4-dicarboxylate + 3 O2 = pyrroloquinoline quinone + 2 H2O2 + 2 H2O + H(+). It participates in cofactor biosynthesis; pyrroloquinoline quinone biosynthesis. Ring cyclization and eight-electron oxidation of 3a-(2-amino-2-carboxyethyl)-4,5-dioxo-4,5,6,7,8,9-hexahydroquinoline-7,9-dicarboxylic-acid to PQQ. The protein is Pyrroloquinoline-quinone synthase of Klebsiella pneumoniae (strain 342).